The following is a 121-amino-acid chain: Basic phospholipase A2 homolog 2 (121 aa).

7 cysteine pairs are disulfide-bonded: C26–C115, C28–C44, C43–C95, C49–C121, C50–C88, C57–C81, and C75–C86. The important for membrane-damaging activities in eukaryotes and bacteria; heparin-binding stretch occupies residues 105–117 (KKYRYHLKPLCKK).

Belongs to the phospholipase A2 family. Group II subfamily. K49 sub-subfamily. As to quaternary structure, homodimer; non-covalently linked (probable alternative/compact dimer conformation in solution). Expressed by the venom gland.

It localises to the secreted. Its function is as follows. Snake venom phospholipase A2 homolog that lacks enzymatic activity. Is myotoxic and displays edema-inducing activities in mouse paw. Also displays cytotoxic activity against myotubes. A model of myotoxic mechanism has been proposed: an apo Lys49-PLA2 is activated by the entrance of a hydrophobic molecule (e.g. fatty acid) at the hydrophobic channel of the protein leading to a reorientation of a monomer. This reorientation causes a transition between 'inactive' to 'active' states, causing alignment of C-terminal and membrane-docking sites (MDoS) side-by-side and putting the membrane-disruption sites (MDiS) in the same plane, exposed to solvent and in a symmetric position for both monomers. The MDoS region stabilizes the toxin on membrane by the interaction of charged residues with phospholipid head groups. Subsequently, the MDiS region destabilizes the membrane with penetration of hydrophobic residues. This insertion causes a disorganization of the membrane, allowing an uncontrolled influx of ions (i.e. calcium and sodium), and eventually triggering irreversible intracellular alterations and cell death. This chain is Basic phospholipase A2 homolog 2, found in Bothrops brazili (Brazil's lancehead).